A 506-amino-acid polypeptide reads, in one-letter code: Transcription factor CP2 (506 aa).

Positions Glu-61–Ser-300 constitute a Grh/CP2 DB domain. The tract at residues Glu-133 to Val-395 is DNA-binding. 2 disordered regions span residues Phe-238–Ser-268 and Ser-291–Pro-316. Residues Lys-241–Tyr-265 show a composition bias toward basic and acidic residues. Residues Ser-291 to Ser-300 show a composition bias toward polar residues.

This sequence belongs to the grh/CP2 family. CP2 subfamily. As to quaternary structure, component of the SSP (stage selector protein) complex, which appears to be a heteromer of TFCP2 and 2 copies of NFE4.

It is found in the nucleus. May function as a transcription factor. This Xenopus laevis (African clawed frog) protein is Transcription factor CP2 (tfcp2).